Consider the following 586-residue polypeptide: MGGKAQFIRDFILKGPVRRTVPIEPVEPSTSGSIAWTSSESGSAHSSRVSSSPITPRKSAETEETLPTCLVRARGSSSAHSCSAATTSQQSNRQSKEHRIGGIKKEEKPIEMGGGSSENGGANGCSNGDNHHVLLMEKQEKIEPKVFRKRWVILVIFMFLSGSNGAQWIQYSIIANIISDYYKVSFQAVDWTSMIYMLTYILFFIPAAWLLDKWGLRLSVLLGALGNCVGAWIKLLSTHPDSFWVTFVGQTIVGASQMFTLGIPPRLAAVWFGPDEVSRACALGVFGNQLGIAVGFVLPPLIVSNGSVEHVTYDLNTLFLGSAVLNTSILALVICFFTARPAVPPSLAQVNALEEKTFDNNFWGTLRKLMTSRDFVILFITYGINTGVFYAISTLLSQMVLSVYPNETETVGYVGLLIVVAGMAGSVVGGFILDKFKKFKLTTIMIYLFSFVGMLSFTLTIDLDSMVLVFINAALLGFFMTGYLPIGFEFAAEITYPAAEGTTSGLLNASAQIFGIALTWLMGIVMHGFGTFTSNIIMSSCLVVGTILTCFIREDLKRQKAHSVQCTIPTSETQLTSCTLQQNEHF.

2 disordered regions span residues 17 to 64 (VRRT…ETEE) and 80 to 123 (HSCS…GGAN). The span at 28 to 37 (PSTSGSIAWT) shows a compositional bias: polar residues. 2 stretches are compositionally biased toward low complexity: residues 38-52 (SSES…VSSS) and 80-91 (HSCSAATTSQQS). The segment covering 94–110 (QSKEHRIGGIKKEEKPI) has biased composition (basic and acidic residues). Residues 112-123 (MGGGSSENGGAN) show a composition bias toward gly residues. 12 helical membrane passes run 151–171 (WVIL…WIQY), 191–211 (WTSM…AWLL), 218–238 (LSVL…LLST), 243–263 (FWVT…TLGI), 283–303 (LGVF…PLIV), 317–337 (TLFL…ICFF), 375–395 (FVIL…ISTL), 413–433 (YVGL…GFIL), 441–461 (LTTI…TLTI), 466–486 (MVLV…YLPI), 513–533 (IFGI…GTFT), and 536–556 (IIMS…REDL).

This sequence belongs to the major facilitator superfamily. Feline leukemia virus subgroup C receptor (TC 2.A.1.28.1) family.

The protein resides in the membrane. This is an uncharacterized protein from Caenorhabditis elegans.